Here is a 334-residue protein sequence, read N- to C-terminus: GTP 3',8-cyclase (334 aa).

The Radical SAM core domain occupies 13 to 239; sequence RFHRKFYYLR…KVKAANDGPA (227 aa). Arg22 provides a ligand contact to GTP. Positions 29 and 33 each coordinate [4Fe-4S] cluster. Residue Tyr35 participates in S-adenosyl-L-methionine binding. Residue Cys36 participates in [4Fe-4S] cluster binding. Arg73 provides a ligand contact to GTP. Gly77 contributes to the S-adenosyl-L-methionine binding site. Thr104 contributes to the GTP binding site. Ser128 contributes to the S-adenosyl-L-methionine binding site. Lys165 is a GTP binding site. Met199 serves as a coordination point for S-adenosyl-L-methionine. Residues Cys262 and Cys265 each contribute to the [4Fe-4S] cluster site. 267-269 serves as a coordination point for GTP; it reads RLR. Position 279 (Cys279) interacts with [4Fe-4S] cluster.

This sequence belongs to the radical SAM superfamily. MoaA family. Monomer and homodimer. [4Fe-4S] cluster serves as cofactor.

It catalyses the reaction GTP + AH2 + S-adenosyl-L-methionine = (8S)-3',8-cyclo-7,8-dihydroguanosine 5'-triphosphate + 5'-deoxyadenosine + L-methionine + A + H(+). The protein operates within cofactor biosynthesis; molybdopterin biosynthesis. Its function is as follows. Catalyzes the cyclization of GTP to (8S)-3',8-cyclo-7,8-dihydroguanosine 5'-triphosphate. The sequence is that of GTP 3',8-cyclase from Vibrio vulnificus (strain CMCP6).